A 447-amino-acid polypeptide reads, in one-letter code: Putative FBD-associated F-box protein At1g61330 (447 aa).

In terms of domain architecture, F-box spans 10-57; that stretch reads KLIKRLSDELVECILSFLPVQSTLQHRVLSKRYRDTWKLSRDLDFSGI. Residues 384-416 form the FBD domain; that stretch reads VKIIGYKGHWHELDIVEFFVKNAPSLKRLELQM.

The sequence is that of Putative FBD-associated F-box protein At1g61330 from Arabidopsis thaliana (Mouse-ear cress).